Consider the following 291-residue polypeptide: Shikimate dehydrogenase (NADP(+)) (291 aa).

Shikimate is bound by residues 18 to 20 (SLS) and Thr-70. The active-site Proton acceptor is the Lys-74. Positions 95 and 110 each coordinate shikimate. NADP(+) contacts are provided by residues 134 to 138 (GAGGA) and Val-228. Tyr-230 lines the shikimate pocket. Position 251 (Gly-251) interacts with NADP(+).

The protein belongs to the shikimate dehydrogenase family. As to quaternary structure, homodimer.

The catalysed reaction is shikimate + NADP(+) = 3-dehydroshikimate + NADPH + H(+). It participates in metabolic intermediate biosynthesis; chorismate biosynthesis; chorismate from D-erythrose 4-phosphate and phosphoenolpyruvate: step 4/7. Its function is as follows. Involved in the biosynthesis of the chorismate, which leads to the biosynthesis of aromatic amino acids. Catalyzes the reversible NADPH linked reduction of 3-dehydroshikimate (DHSA) to yield shikimate (SA). The protein is Shikimate dehydrogenase (NADP(+)) of Streptomyces avermitilis (strain ATCC 31267 / DSM 46492 / JCM 5070 / NBRC 14893 / NCIMB 12804 / NRRL 8165 / MA-4680).